A 40-amino-acid polypeptide reads, in one-letter code: U1-ectatotoxin-Eb1a subunit A (40 aa).

It belongs to the ectatomin family. Ectatomin-Eq subfamily. In terms of assembly, heterodimer of subunits A and B; disulfide-linked. Expressed by the venom gland.

The protein localises to the secreted. It is found in the target cell membrane. This chain is U1-ectatotoxin-Eb1a subunit A, found in Ectatomma brunneum (Ant).